Consider the following 365-residue polypeptide: UDP-N-acetylglucosamine--N-acetylmuramyl-(pentapeptide) pyrophosphoryl-undecaprenol N-acetylglucosamine transferase (365 aa).

UDP-N-acetyl-alpha-D-glucosamine contacts are provided by residues 10 to 12, asparagine 128, arginine 170, serine 199, isoleucine 250, and glutamine 295; that span reads TGG.

This sequence belongs to the glycosyltransferase 28 family. MurG subfamily.

The protein localises to the cell inner membrane. The catalysed reaction is di-trans,octa-cis-undecaprenyl diphospho-N-acetyl-alpha-D-muramoyl-L-alanyl-D-glutamyl-meso-2,6-diaminopimeloyl-D-alanyl-D-alanine + UDP-N-acetyl-alpha-D-glucosamine = di-trans,octa-cis-undecaprenyl diphospho-[N-acetyl-alpha-D-glucosaminyl-(1-&gt;4)]-N-acetyl-alpha-D-muramoyl-L-alanyl-D-glutamyl-meso-2,6-diaminopimeloyl-D-alanyl-D-alanine + UDP + H(+). Its pathway is cell wall biogenesis; peptidoglycan biosynthesis. Cell wall formation. Catalyzes the transfer of a GlcNAc subunit on undecaprenyl-pyrophosphoryl-MurNAc-pentapeptide (lipid intermediate I) to form undecaprenyl-pyrophosphoryl-MurNAc-(pentapeptide)GlcNAc (lipid intermediate II). The polypeptide is UDP-N-acetylglucosamine--N-acetylmuramyl-(pentapeptide) pyrophosphoryl-undecaprenol N-acetylglucosamine transferase (Pelodictyon phaeoclathratiforme (strain DSM 5477 / BU-1)).